A 229-amino-acid chain; its full sequence is Sugar fermentation stimulation protein homolog (229 aa).

It belongs to the SfsA family.

This is Sugar fermentation stimulation protein homolog from Caldanaerobacter subterraneus subsp. tengcongensis (strain DSM 15242 / JCM 11007 / NBRC 100824 / MB4) (Thermoanaerobacter tengcongensis).